The chain runs to 297 residues: Ribosomal RNA small subunit methyltransferase H (297 aa).

Residues 34–36 (AGH), D54, F88, D106, and Q113 contribute to the S-adenosyl-L-methionine site. Positions 272-297 (PLTAGEEETDRNPRARSAKLRAAEKK) are disordered.

Belongs to the methyltransferase superfamily. RsmH family.

It localises to the cytoplasm. It catalyses the reaction cytidine(1402) in 16S rRNA + S-adenosyl-L-methionine = N(4)-methylcytidine(1402) in 16S rRNA + S-adenosyl-L-homocysteine + H(+). Functionally, specifically methylates the N4 position of cytidine in position 1402 (C1402) of 16S rRNA. The polypeptide is Ribosomal RNA small subunit methyltransferase H (Acidobacterium capsulatum (strain ATCC 51196 / DSM 11244 / BCRC 80197 / JCM 7670 / NBRC 15755 / NCIMB 13165 / 161)).